The primary structure comprises 155 residues: Large ribosomal subunit protein uL22 (155 aa).

This sequence belongs to the universal ribosomal protein uL22 family. In terms of assembly, part of the 50S ribosomal subunit.

In terms of biological role, this protein binds specifically to 23S rRNA. It makes multiple contacts with different domains of the 23S rRNA in the assembled 50S subunit and ribosome. Functionally, the globular domain of the protein is located near the polypeptide exit tunnel on the outside of the subunit, while an extended beta-hairpin is found that lines the wall of the exit tunnel in the center of the 70S ribosome. The sequence is that of Large ribosomal subunit protein uL22 from Pyrococcus furiosus (strain ATCC 43587 / DSM 3638 / JCM 8422 / Vc1).